Reading from the N-terminus, the 179-residue chain is Replication restart protein DnaT (179 aa).

The tract at residues Gly-156–Gly-179 is disordered.

Belongs to the DnaT family. Homooligomerizes. Interacts with PriB. Component of the replication restart primosome. Primosome assembly occurs via a 'hand-off' mechanism. PriA binds to replication forks, subsequently PriB then DnaT bind; DnaT then displaces ssDNA to generate the helicase loading substrate.

In terms of biological role, involved in the restart of stalled replication forks, which reloads the replicative helicase on sites other than the origin of replication. Can function in multiple replication restart pathways. Displaces ssDNA from a PriB-ssDNA complex. Probably forms a spiral filament on ssDNA. The protein is Replication restart protein DnaT of Escherichia coli (strain ATCC 8739 / DSM 1576 / NBRC 3972 / NCIMB 8545 / WDCM 00012 / Crooks).